A 335-amino-acid polypeptide reads, in one-letter code: Calcium/calmodulin-dependent protein kinase type I (335 aa).

Residues 31-291 (YRVGRVLGGG…AADALKHPFL (261 aa)) enclose the Protein kinase domain. Residue 37–45 (LGGGTYATV) coordinates ATP. Asp-154 functions as the Proton acceptor in the catalytic mechanism. Phosphothreonine; by autocatalysis is present on Thr-192. Residues 310-334 (NARKTFRTAYNAVRAFNTWKKLENK) form a calmodulin-binding region.

The protein belongs to the protein kinase superfamily. CAMK Ser/Thr protein kinase family. CaMK subfamily.

The protein localises to the cytoplasm. The catalysed reaction is L-seryl-[protein] + ATP = O-phospho-L-seryl-[protein] + ADP + H(+). It catalyses the reaction L-threonyl-[protein] + ATP = O-phospho-L-threonyl-[protein] + ADP + H(+). In terms of biological role, important in cell cycle regulation. In Schizosaccharomyces pombe (strain 972 / ATCC 24843) (Fission yeast), this protein is Calcium/calmodulin-dependent protein kinase type I (cmk1).